Here is a 308-residue protein sequence, read N- to C-terminus: UPF0282 protein PYRAB09800 (308 aa).

Belongs to the UPF0282 family.

The protein is UPF0282 protein PYRAB09800 of Pyrococcus abyssi (strain GE5 / Orsay).